The primary structure comprises 579 residues: Probable receptor-like serine/threonine-protein kinase At5g57670 (579 aa).

T256 carries the phosphothreonine modification. In terms of domain architecture, Protein kinase spans 267 to 542; that stretch reads FHQGNIVGIG…LLTNGNEAEI (276 aa). ATP contacts are provided by residues 273–281 and K295; that span reads VGIGGYSEV. Residue D392 is the Proton acceptor of the active site. S396 is subject to Phosphoserine. Position 432 is a phosphothreonine (T432).

The protein belongs to the protein kinase superfamily. Ser/Thr protein kinase family.

The enzyme catalyses L-seryl-[protein] + ATP = O-phospho-L-seryl-[protein] + ADP + H(+). It carries out the reaction L-threonyl-[protein] + ATP = O-phospho-L-threonyl-[protein] + ADP + H(+). This is Probable receptor-like serine/threonine-protein kinase At5g57670 from Arabidopsis thaliana (Mouse-ear cress).